Consider the following 184-residue polypeptide: Endoribonuclease YbeY (184 aa).

Positions 118, 122, and 128 each coordinate Zn(2+). The interval 156 to 184 is disordered; it reads YHQDRQSQKDQRLLDKSRYFDELNHGDTP. Residues 157-184 are compositionally biased toward basic and acidic residues; sequence HQDRQSQKDQRLLDKSRYFDELNHGDTP.

Belongs to the endoribonuclease YbeY family. Zn(2+) serves as cofactor.

The protein localises to the cytoplasm. In terms of biological role, single strand-specific metallo-endoribonuclease involved in late-stage 70S ribosome quality control and in maturation of the 3' terminus of the 16S rRNA. This is Endoribonuclease YbeY from Mycolicibacterium vanbaalenii (strain DSM 7251 / JCM 13017 / BCRC 16820 / KCTC 9966 / NRRL B-24157 / PYR-1) (Mycobacterium vanbaalenii).